The primary structure comprises 88 residues: MALLDFFLSRKKSTANIAKERLQIIVAERRRSDAEPHYLPQLRKDILEVICKYVQIDPEMVTVQLEQKDGDISILELNVTLPEAEESK.

The protein belongs to the MinE family.

Its function is as follows. Prevents the cell division inhibition by proteins MinC and MinD at internal division sites while permitting inhibition at polar sites. This ensures cell division at the proper site by restricting the formation of a division septum at the midpoint of the long axis of the cell. This Salmonella agona (strain SL483) protein is Cell division topological specificity factor.